The primary structure comprises 461 residues: FAD-dependent monooxygenase nodY2 (461 aa).

2 residues coordinate FAD: Glu-48 and Arg-136. Residue Arg-214 is part of the active site. Positions 338 and 351 each coordinate FAD.

Belongs to the paxM FAD-dependent monooxygenase family. The cofactor is FAD.

It participates in secondary metabolite biosynthesis. Its function is as follows. FAD-dependent monooxygenase; part of the gene cluster that mediates the biosynthesis of the indole diterpenes nodulisporic acids (NA). Nodulisporic acid A (NAA) and its chemically modified derivatives are of particular significance because of their highly potent insecticidal activity against blood-feeding arthropods and lack of observable adverse effects on mammals, in particular the tremogenicity associated with the paspaline-derived IDTs is not observed. The geranylgeranyl diphosphate (GGPP) synthase ggs1, localized outside of the cluster, is proposed to catalyze the first step in nodulisporic acid biosynthesis via conversion of farnesyl pyrophosphate and isopentyl pyrophosphate into geranylgeranyl pyrophosphate (GGPP). Condensation of indole-3-glycerol phosphate with GGPP by the prenyl transferase nodC then forms 3-geranylgeranylindole (3-GGI). Epoxidation by the FAD-dependent monooxygenase nodM leads to a single-epoxidized-GGI that is substrate of the terpene cyclase nodB for cyclization to yield emindole SB. The terminal methyl carbon, C28, of emindole SB is then oxidized by the cytochrome P450 monooxygenase nodW to produce nodulisporic acid F (NAF), the pentacyclic core of NAA. NAF is converted to nodulisporic acid E (NAE) via prenylation. This step is probably performed by one of the indole diterpene prenyltransferases nodD1 or nodD2. Several oxidation steps performed by the FAD-linked oxidoreductase nodO and one of the cytochrome P450 monooxygenase nodR, nodX or nodZ further convert NAE to nodulisporic acid D (NAD). NAD is substrate of cytochrome P450 monooxygenase nodJ to produce the precursor of nodulisporic acid C (NAC), converted to NAC by one of the indole diterpene prenyltransferases nodD1 or nodD2. The FAD-dependent monooxygenase nodY2 then oxidizes NAC to nodulisporic acid B (NAB). Finally NAB is converted to NAA by one of the cytochrome P450 monooxygenases nodR, nodX or nodZ. This chain is FAD-dependent monooxygenase nodY2, found in Hypoxylon pulicicidum.